Here is a 156-residue protein sequence, read N- to C-terminus: Regulatory protein RecX (156 aa).

The protein belongs to the RecX family.

Its subcellular location is the cytoplasm. Functionally, modulates RecA activity. This Pseudomonas putida (strain GB-1) protein is Regulatory protein RecX.